We begin with the raw amino-acid sequence, 296 residues long: MLNRFSYSSNAWHNLRVDGPDADGIAVIVLARSQSRNALTLPMLTDMVQLLSAMDADDSVKCIVFTGEGPFFCSGVDLTEGFGEIGKTRDTHRDAGGKLALAIHNCRKPTIAAINGTAVGVGITMTLPMSIRIAAKTAKISFPFVRRGIVADAASSFYLPRLIGYGRALHLFTTGALYPAESGLLHGLFSETVNAASSTLPRALEVARDIAVNASQVGVYLTRDLVYRSPRSPEQAHLLESAALYTRYQSRDFEEGVQSFLEKRKPRFQDTMREQSGEGVLDRGDCVVGLAFKPKL.

The Peroxisomal targeting signal type 1 motif lies at 294-296; the sequence is PKL.

It belongs to the enoyl-CoA hydratase/isomerase family.

It is found in the peroxisome. It catalyses the reaction a (3S)-3-hydroxyacyl-CoA = a (2E)-enoyl-CoA + H2O. The enzyme catalyses a 4-saturated-(3S)-3-hydroxyacyl-CoA = a (3E)-enoyl-CoA + H2O. It functions in the pathway mycotoxin biosynthesis. Enoyl-CoA hydratase; part of the gene clusters that mediate the biosynthesis of the host-selective toxins (HSTs) AF-toxins responsible for Alternaria black spot of strawberry disease by the strawberry pathotype. AF-toxin I and III are valine derivatives of 2,3-dyhydroxy-isovaleric acid and 2-hydroxy-isovaleric acid respectively, while AF II is an isoleucine derivative of 2-hydroxy-valeric acid. These derivatives are bound to a 9,10-epoxy-8-hydroxy-9-methyl-decatrienoic acid (EDA) moiety. On cellular level, AF-toxins affect plasma membrane of susceptible cells and cause a sudden increase in loss of K(+) after a few minutes of toxin treatment. The aldo-keto reductase AFTS1 catalyzes the conversion of 2-keto-isovaleric acid (2-KIV) to 2-hydroxy-isovaleric acid (2-HIV) by reduction of its ketone to an alcohol. The acyl-CoA ligase AFT1, the hydrolase AFT2 and the enoyl-CoA hydratases AFT3 and AFT6, but also the polyketide synthase AFT9, the acyl-CoA dehydrogenase AFT10, the cytochrome P450 monooxygenase AFT11 and the oxidoreductase AFT12 are all involved in the biosynthesis of the AK-, AF- and ACT-toxin common EDA structural moiety. The exact function of each enzyme, and of additional enzymes identified within the AF-toxin clusters have still to be determined. The polypeptide is Enoyl-CoA hydratase AFT3-1 (AFT3-1) (Alternaria alternata (Alternaria rot fungus)).